The primary structure comprises 210 residues: Probable high-affinity nitrate transporter-activating protein 2.2 (210 aa).

The first 23 residues, 1–23 (MARFGAVIHRVFLPLLLLLVVLG), serve as a signal peptide directing secretion. Residues 182–202 (IEVAAGVLSAFSVAALAVFLV) form a helical membrane-spanning segment.

It belongs to the NAR2 family.

It is found in the cell membrane. In terms of biological role, involved in nitrate transport. This Oryza sativa subsp. japonica (Rice) protein is Probable high-affinity nitrate transporter-activating protein 2.2 (NAR2.2).